Here is a 308-residue protein sequence, read N- to C-terminus: Autophagy-related protein 3 (308 aa).

The segment at 83–159 (NFVETQTTET…NELADDDDDI (77 aa)) is flexible region. A disordered region spans residues 89 to 121 (TTETRDVGDGWELEGQSEGERESGREDTKSNEE). The segment covering 106–120 (EGERESGREDTKSNE) has biased composition (basic and acidic residues). The active-site Glycyl thioester intermediate is the C235. Residues 239–283 (NVMKVLMEKVRASRHRARDTEAQKNAEEDWEDLQSDIDDGLRVDQ) form a handle region region.

The protein belongs to the ATG3 family. Monomer. Interacts with ATG8 through an intermediate thioester bond between Cys-235 and the C-terminal Gly of ATG8. Interacts with the C-terminal region of the E1-like ATG7 enzyme. Also interacts with the ATG12-ATG5 conjugate.

The protein resides in the cytoplasm. Its function is as follows. E2 conjugating enzyme required for the cytoplasm to vacuole transport (Cvt) and autophagy. Required for selective autophagic degradation of the nucleus (nucleophagy) as well as for mitophagy which contributes to regulate mitochondrial quantity and quality by eliminating the mitochondria to a basal level to fulfill cellular energy requirements and preventing excess ROS production. Responsible for the E2-like covalent binding of phosphatidylethanolamine to the C-terminal Gly of ATG8. The ATG12-ATG5 conjugate plays a role of an E3 and promotes the transfer of ATG8 from ATG3 to phosphatidylethanolamine (PE). This step is required for the membrane association of ATG8. The formation of the ATG8-phosphatidylethanolamine conjugate is essential for autophagy and for the cytoplasm to vacuole transport (Cvt). The ATG8-PE conjugate mediates tethering between adjacent membranes and stimulates membrane hemifusion, leading to expansion of the autophagosomal membrane during autophagy. This is Autophagy-related protein 3 from Kluyveromyces marxianus (strain DMKU3-1042 / BCC 29191 / NBRC 104275) (Yeast).